We begin with the raw amino-acid sequence, 87 residues long: Small ribosomal subunit protein uS17 (87 aa).

Belongs to the universal ribosomal protein uS17 family. As to quaternary structure, part of the 30S ribosomal subunit.

In terms of biological role, one of the primary rRNA binding proteins, it binds specifically to the 5'-end of 16S ribosomal RNA. In Dichelobacter nodosus (strain VCS1703A), this protein is Small ribosomal subunit protein uS17.